Reading from the N-terminus, the 505-residue chain is Cytochrome P450 monooxygenase FGM1 (505 aa).

Residues 1–23 form the signal peptide; it reads MPLILSITSSGTVLVLLTLLSLA. Residues asparagine 188 and asparagine 351 are each glycosylated (N-linked (GlcNAc...) asparagine). Residue cysteine 450 participates in heme binding.

It belongs to the cytochrome P450 family. It depends on heme as a cofactor.

Its pathway is secondary metabolite biosynthesis. In terms of biological role, cytochrome P450 monooxygenase; part of the Fg3_54/C64 gene cluster that mediates the biosynthesis of the octapeptide fusaoctaxin A, a virulence factor that is required for cell-to-cell invasiveness of plant host. The 2 nonribosomal peptide synthetases NRPS9 and NRPS5 form an assembly line which likely utilizes GABA as a starter unit (loaded on the unique module M1 of NRPS9) and sequentially incorporates seven extender units composed of the residues L-Ala, L-allo-Ile, L-Ser, L-Val, L-Ser, L-Leu and L-Leu, respectively. During the process, each of the residues that are tethered on modules M3-M7 of NRPS5 containing an E domain can undergo an epimerization reaction to produce a D-configuration before the transpeptidation reaction occurs. The elongation of the peptidyl chain might be terminated by module M8-mediated L-Leu incorporation, followed by R domain-catalyzed 4 electron reduction to release the resulting octapeptide from the assembly line as an alcohol. Fusaoctaxin A is cleaved by the cluster specific ABC transporter FGM5 to the pentapeptide fusapentaxin A and the tripeptide fusatrixin A. The other enzymes from the cluster, FGM1, FGM2, FGM3 and FGM9 seem not to be involved in the biosynthesis of fusaoctaxin A and their functions have still to be determined. This Gibberella zeae (strain ATCC MYA-4620 / CBS 123657 / FGSC 9075 / NRRL 31084 / PH-1) (Wheat head blight fungus) protein is Cytochrome P450 monooxygenase FGM1.